A 438-amino-acid chain; its full sequence is GDP-mannose 6-dehydrogenase (438 aa).

Positions 10, 11, 30, 35, 86, and 124 each coordinate NAD(+). GDP-alpha-D-mannuronate-binding residues include Glu161, Lys210, Asn214, His217, Asn225, Tyr256, Tyr257, Arg259, Phe262, and Gly265. Cys268 is a catalytic residue. An NAD(+)-binding site is contributed by Lys271. Lys324 contributes to the GDP-alpha-D-mannuronate binding site. Arg331 contributes to the NAD(+) binding site.

It belongs to the UDP-glucose/GDP-mannose dehydrogenase family.

The catalysed reaction is GDP-alpha-D-mannose + 2 NAD(+) + H2O = GDP-alpha-D-mannuronate + 2 NADH + 3 H(+). The protein operates within glycan biosynthesis; alginate biosynthesis. Catalyzes the oxidation of guanosine diphospho-D-mannose (GDP-D-mannose) to GDP-D-mannuronic acid, a precursor for alginate polymerization. The alginate layer causes a mucoid phenotype and provides a protective barrier against host immune defenses and antibiotics. In Pseudomonas savastanoi pv. phaseolicola (Pseudomonas syringae pv. phaseolicola), this protein is GDP-mannose 6-dehydrogenase (algD).